A 500-amino-acid polypeptide reads, in one-letter code: MSIMPVKNALAQGRTLLMGRMPAVKFSTRMQLRNRTAVLWNRKFSTRLFVQQRRSSGEIVDRAKAAAANSGRKQVSMKWVVLTSFTIVLGTILLVSRNDSTEEDATEGKKGRRTRKIKIFNNNWLFFCYSTLPLNAMSRLWGQVNSLTLPIWVRPWGYRLYSFLFGVNLDEMEDPDLTHYANLSEFFYRNIKPGTRPVAQGEDVIASPSDGKILQVGIINSETGEIEQVKGMTYSIKEFLGTHSHPLMSKSASSLDLTSDEEKHREFARVNRIQLAGSEDTEQPLLNFKNEGDQSVREFKPSVSKNIHLLSQLSLNYFSNGFSCSEPHDTELFFAVIYLAPGDYHHFHSPVDWVCKVRRHFPGDLFSVAPYFQRNFPNLFVLNERVALLGSWKYGFFSMTPVGATNVGSIKLNFDQEFVTNSKSDKHLEPHTCYQAVYENASKILGGMPLVKGEEMGGFELGSTVVLCFEAPTEFKFDVRVGDKVKMGQKLGIIGKNDLK.

The N-terminal 48 residues, Met-1–Leu-48, are a transit peptide targeting the mitochondrion; not cleaved when targeted to the endoplasmic reticulum. An N-linked (GlcNAc...) asparagine glycan is attached at Asn-34. The Mitochondrial matrix portion of the chain corresponds to Ser-45–Trp-79. The enables targeting to the endoplasmic reticulum in addition to mitochondria stretch occupies residues Gly-57 to Thr-101. A helical membrane pass occupies residues Val-80–Asn-98. Residues Asp-99 to Lys-500 lie on the Mitochondrial intermembrane side of the membrane. Catalysis depends on charge relay system; for autoendoproteolytic cleavage activity residues Asp-210, His-348, and Ser-463. Ser-463 serves as the catalytic Schiff-base intermediate with substrate; via pyruvic acid; for decarboxylase activity. Ser-463 is subject to Pyruvic acid (Ser); by autocatalysis. Positions Phe-475–Gly-492 are required for processing and stability.

It belongs to the phosphatidylserine decarboxylase family. PSD-B subfamily. Eukaryotic type I sub-subfamily. Heterodimer of a large membrane-associated beta subunit and a small pyruvoyl-containing alpha subunit. It depends on pyruvate as a cofactor. Glycosylated at Asn-34 in the endoplasmic reticulum. In terms of processing, the precursor is imported via the TOM complex into mitochondria, where the N-terminal presequence is cleaved by the matrix-located proteases MPP (MAS1-MAS2) and OCT1. Post-translationally, is synthesized initially as an inactive proenzyme. Formation of the active enzyme involves a self-maturation process in which the active site pyruvoyl group is generated from an internal serine residue via an autocatalytic post-translational modification. Two non-identical subunits are generated from the proenzyme in this reaction, and the pyruvate is formed at the N-terminus of the alpha chain, which is derived from the carboxyl end of the proenzyme. The autoendoproteolytic cleavage occurs by a canonical serine protease mechanism, in which the side chain hydroxyl group of the serine supplies its oxygen atom to form the C-terminus of the beta chain, while the remainder of the serine residue undergoes an oxidative deamination to produce ammonia and the pyruvoyl prosthetic group on the alpha chain. During this reaction, the Ser that is part of the protease active site of the proenzyme becomes the pyruvoyl prosthetic group, which constitutes an essential element of the active site of the mature decarboxylase.

The protein localises to the mitochondrion inner membrane. It localises to the lipid droplet. The protein resides in the endoplasmic reticulum membrane. It catalyses the reaction a 1,2-diacyl-sn-glycero-3-phospho-L-serine + H(+) = a 1,2-diacyl-sn-glycero-3-phosphoethanolamine + CO2. The protein operates within phospholipid metabolism; phosphatidylethanolamine biosynthesis; phosphatidylethanolamine from CDP-diacylglycerol: step 2/2. Functionally, catalyzes the formation of phosphatidylethanolamine (PtdEtn) from phosphatidylserine (PtdSer). Plays a central role in phospholipid metabolism and in the interorganelle trafficking of phosphatidylserine. Phosphatidylethanolamine formed in the mitochondria is exported to other membranes to fullfill their requirements for PtdEtn. Required for normal mitochondrial morphology and proper mitochondrial fusion during yeast mating. Involved in lipid droplet biogenesis at the endoplasmic reticulum membrane. Required for induction of mitophagy during nitrogen starvation. Appears to play a specific role in supporting respiratory complex III activity. The sequence is that of Phosphatidylserine decarboxylase proenzyme 1, mitochondrial from Saccharomyces cerevisiae (strain ATCC 204508 / S288c) (Baker's yeast).